Reading from the N-terminus, the 163-residue chain is Phosphopantetheine adenylyltransferase (163 aa).

Substrate is bound at residue T9. Residues 9–10 and H17 each bind ATP; that span reads TF. Residues K41, L76, and R90 each contribute to the substrate site. Residues 91-93, E101, and 126-132 each bind ATP; these read GLR and YSFISST.

The protein belongs to the bacterial CoaD family. Homohexamer. It depends on Mg(2+) as a cofactor.

The protein localises to the cytoplasm. It carries out the reaction (R)-4'-phosphopantetheine + ATP + H(+) = 3'-dephospho-CoA + diphosphate. Its pathway is cofactor biosynthesis; coenzyme A biosynthesis; CoA from (R)-pantothenate: step 4/5. In terms of biological role, reversibly transfers an adenylyl group from ATP to 4'-phosphopantetheine, yielding dephospho-CoA (dPCoA) and pyrophosphate. This chain is Phosphopantetheine adenylyltransferase, found in Dichelobacter nodosus (strain VCS1703A).